An 847-amino-acid chain; its full sequence is B-cell receptor CD22 (847 aa).

Positions 1–19 (MHLLGPWLLLLVLEYLAFS) are cleaved as a signal peptide. An Ig-like V-type domain is found at 20 to 138 (DSSKWAFEHP…MERIHLNVSE (119 aa)). At 20–687 (DSSKWAFEHP…YYSPETIGRR (668 aa)) the chain is on the extracellular side. Residues N67, N101, and N112 are each glycosylated (N-linked (GlcNAc...) asparagine). An N-acetylneuraminate-binding site is contributed by R120. N-linked (GlcNAc...) asparagine glycosylation is found at N135, N164, and N231. 6 Ig-like C2-type domains span residues 143 to 235 (PHIQ…DTVQ), 242 to 326 (PKLE…VFLQ), 331 to 416 (PEPS…LDVQ), 419 to 500 (PKKV…VALN), 505 to 582 (PRDV…QTAS), and 593 to 676 (PRRL…STLT). A disulfide bond links C161 and C219. Cystine bridges form between C265/C309 and C353/C396. Residues N363, N428, N445, N448, and N479 are each glycosylated (N-linked (GlcNAc...) asparagine). Disulfide bonds link C442–C484 and C529–C571. 2 N-linked (GlcNAc...) asparagine glycosylation sites follow: N574 and N634. C616 and C659 form a disulfide bridge. Residues 688-708 (VAVGFGSCLAILILAICGLKL) form a helical membrane-spanning segment. Topologically, residues 709–847 (QRRWKRTQSQ…ENVDYVILKH (139 aa)) are cytoplasmic. A phosphoserine mark is found at S725, S726, and S729. Short sequence motifs (ITIM motif) lie at residues 760–765 (ISYTTL) and 794–799 (VTYSVL). Phosphotyrosine is present on Y762. 3 positions are modified to phosphotyrosine: Y807, Y822, and Y842. 2 short sequence motifs (ITIM motif) span residues 820–825 (IHYSEL) and 840–845 (VDYVIL).

This sequence belongs to the immunoglobulin superfamily. SIGLEC (sialic acid binding Ig-like lectin) family. Predominantly monomer of isoform CD22-beta. Also found as heterodimer of isoform CD22-beta and a shorter isoform. Interacts with PTPN6/SHP-1, LYN, SYK, PIK3R1/PIK3R2 and PLCG1 upon phosphorylation. Interacts with GRB2, INPP5D and SHC1 upon phosphorylation. May form a complex with INPP5D/SHIP, GRB2 and SHC1. In terms of processing, phosphorylation of Tyr-762, Tyr-807 and Tyr-822 are involved in binding to SYK, GRB2 and SYK, respectively. Phosphorylation of Tyr-842 is involved in binding to SYK, PLCG2 and PIK3R1/PIK3R2. Post-translationally, phosphorylated on tyrosine residues by LYN.

The protein resides in the cell membrane. Most highly expressed siglec (sialic acid-binding immunoglobulin-like lectin) on B-cells that plays a role in various aspects of B-cell biology including differentiation, antigen presentation, and trafficking to bone marrow. Binds to alpha 2,6-linked sialic acid residues of surface molecules such as CD22 itself, CD45 and IgM in a cis configuration. Can also bind to ligands on other cells as an adhesion molecule in a trans configuration. Acts as an inhibitory coreceptor on the surface of B-cells and inhibits B-cell receptor induced signaling, characterized by inhibition of the calcium mobilization and cellular activation. Mechanistically, the immunoreceptor tyrosine-based inhibitory motif domain is phosphorylated by the Src kinase LYN, which in turn leads to the recruitment of the protein tyrosine phosphatase 1/PTPN6, leading to the negative regulation of BCR signaling. If this negative signaling from is of sufficient strength, apoptosis of the B-cell can be induced. In Pan paniscus (Pygmy chimpanzee), this protein is B-cell receptor CD22.